A 231-amino-acid chain; its full sequence is ATP-dependent dethiobiotin synthetase BioD (231 aa).

12–17 is a binding site for ATP; that stretch reads EVGKTV. Mg(2+) is bound at residue Thr-16. Lys-37 is a catalytic residue. Substrate is bound at residue Ser-41. Residues Asp-51, 112–115, and 202–204 contribute to the ATP site; these read EGAG and PKL. Mg(2+) contacts are provided by Asp-51 and Glu-112.

It belongs to the dethiobiotin synthetase family. In terms of assembly, homodimer. Mg(2+) is required as a cofactor.

The protein resides in the cytoplasm. It catalyses the reaction (7R,8S)-7,8-diammoniononanoate + CO2 + ATP = (4R,5S)-dethiobiotin + ADP + phosphate + 3 H(+). It functions in the pathway cofactor biosynthesis; biotin biosynthesis; biotin from 7,8-diaminononanoate: step 1/2. Functionally, catalyzes a mechanistically unusual reaction, the ATP-dependent insertion of CO2 between the N7 and N8 nitrogen atoms of 7,8-diaminopelargonic acid (DAPA, also called 7,8-diammoniononanoate) to form a ureido ring. The protein is ATP-dependent dethiobiotin synthetase BioD of Bacillus subtilis (strain 168).